Consider the following 406-residue polypeptide: Protease ElaD (406 aa).

Residue H234 is part of the active site. C316 functions as the Nucleophile in the catalytic mechanism.

It belongs to the peptidase C79 family.

In terms of biological role, protease that can act as an efficient and specific deubiquitinating enzyme in vitro. Does not possess desumoylating and deneddylating activities. The physiological substrate is unknown. The protein is Protease ElaD (elaD) of Escherichia coli O139:H28 (strain E24377A / ETEC).